Reading from the N-terminus, the 313-residue chain is Ribonuclease Z (313 aa).

Residues H63, H65, D67, H68, H142, D212, and H270 each coordinate Zn(2+). Residue D67 is the Proton acceptor of the active site.

Belongs to the RNase Z family. As to quaternary structure, homodimer. It depends on Zn(2+) as a cofactor.

It carries out the reaction Endonucleolytic cleavage of RNA, removing extra 3' nucleotides from tRNA precursor, generating 3' termini of tRNAs. A 3'-hydroxy group is left at the tRNA terminus and a 5'-phosphoryl group is left at the trailer molecule.. In terms of biological role, zinc phosphodiesterase, which displays some tRNA 3'-processing endonuclease activity. Probably involved in tRNA maturation, by removing a 3'-trailer from precursor tRNA. The polypeptide is Ribonuclease Z (Enterococcus faecalis (strain ATCC 700802 / V583)).